Here is a 260-residue protein sequence, read N- to C-terminus: Ubiquinone/menaquinone biosynthesis C-methyltransferase UbiE (260 aa).

Residues T83, D104, 132–133, and S149 contribute to the S-adenosyl-L-methionine site; that span reads NA.

The protein belongs to the class I-like SAM-binding methyltransferase superfamily. MenG/UbiE family.

It carries out the reaction a 2-demethylmenaquinol + S-adenosyl-L-methionine = a menaquinol + S-adenosyl-L-homocysteine + H(+). The enzyme catalyses a 2-methoxy-6-(all-trans-polyprenyl)benzene-1,4-diol + S-adenosyl-L-methionine = a 5-methoxy-2-methyl-3-(all-trans-polyprenyl)benzene-1,4-diol + S-adenosyl-L-homocysteine + H(+). It functions in the pathway quinol/quinone metabolism; menaquinone biosynthesis; menaquinol from 1,4-dihydroxy-2-naphthoate: step 2/2. It participates in cofactor biosynthesis; ubiquinone biosynthesis. Functionally, methyltransferase required for the conversion of demethylmenaquinol (DMKH2) to menaquinol (MKH2) and the conversion of 2-polyprenyl-6-methoxy-1,4-benzoquinol (DDMQH2) to 2-polyprenyl-3-methyl-6-methoxy-1,4-benzoquinol (DMQH2). The protein is Ubiquinone/menaquinone biosynthesis C-methyltransferase UbiE of Vibrio cholerae serotype O1 (strain ATCC 39315 / El Tor Inaba N16961).